Reading from the N-terminus, the 661-residue chain is CD180 antigen (661 aa).

The N-terminal stretch at 1–23 is a signal peptide; sequence MAFDVSCFFWVVLFSAGCKVITS. Residues 24–626 are Extracellular-facing; it reads WDQMCIEKEA…KLSDVKLSCG (603 aa). The 21-residue stretch at 33 to 53 folds into the LRRNT domain; sequence ANKTYNCENLGLSEIPDTLPN. N-linked (GlcNAc...) asparagine glycosylation is found at Asn34, Asn53, Asn70, and Asn78. 7 LRR repeats span residues 54 to 75, 78 to 99, 102 to 123, 126 to 147, 150 to 171, 174 to 195, and 201 to 221; these read TTEF…TFSR, NLTF…TFQS, QLST…SLNG, SLKH…PVHN, NLES…KDFP, NLKV…DMRS, and NLSL…AFDS. 3 N-linked (GlcNAc...) asparagine glycosylation sites follow: Asn201, Asn234, and Asn244. LRR repeat units lie at residues 275 to 296, 299 to 320, 322 to 343, 346 to 366, and 371 to 391; these read SVES…TFQC, QLQE…MKGL, LLKK…SAAN, SLTH…VGCL, and NLQT…CSLQ. N-linked (GlcNAc...) asparagine glycosylation is found at Asn394 and Asn402. LRR repeat units follow at residues 397–418, 421–442, 446–466, 470–493, 497–518, 521–544, and 546–564; these read HLQT…AFKE, QLEL…SPFQ, FLQV…HLLA, VLRH…NLLQ, SLEV…AFHS, KMSH…SHLK, and IYLN…RLLP. Asn451 carries N-linked (GlcNAc...) asparagine glycosylation. A glycan (N-linked (GlcNAc...) asparagine) is linked at Asn573. Positions 577–627 constitute an LRRCT domain; that stretch reads NPLDCTCSNIHFLTWYKENLHKLEGSEETTCANPPSLRGVKLSDVKLSCGI. A helical membrane pass occupies residues 627 to 650; the sequence is ITAIGIFFLIVFLLLLAILLFFAV. The Cytoplasmic segment spans residues 651–661; sequence KYLLRWKYQHI.

It belongs to the Toll-like receptor family. In terms of assembly, M-shaped tetramer of two CD180-LY86 heterodimers. As to expression, expressed mainly on mature peripherical B cells. Detected in spleen, lymph node and appendix. Not detected in pre-B and -T cells.

It localises to the cell membrane. Its function is as follows. May cooperate with MD-1 and TLR4 to mediate the innate immune response to bacterial lipopolysaccharide (LPS) in B-cells. Leads to NF-kappa-B activation. Also involved in the life/death decision of B-cells. The chain is CD180 antigen (CD180) from Homo sapiens (Human).